Consider the following 379-residue polypeptide: Cytochrome b (379 aa).

4 helical membrane-spanning segments follow: residues 33 to 53, 77 to 98, 113 to 133, and 178 to 198; these read FGSL…FLAM, WLIR…YLHI, WNIG…GYVL, and FFAF…LHLL. Residues H83 and H97 each contribute to the heme b site. H182 and H196 together coordinate heme b. Residue H201 participates in a ubiquinone binding. Transmembrane regions (helical) follow at residues 226 to 246, 288 to 308, 320 to 340, and 347 to 367; these read YKDL…ALFY, LGGV…PILH, ASQL…WIGG, and YIII…VLNP.

This sequence belongs to the cytochrome b family. The cytochrome bc1 complex contains 3 respiratory subunits (MT-CYB, CYC1 and UQCRFS1), 2 core proteins (UQCRC1 and UQCRC2) and probably 6 low-molecular weight proteins. Heme b serves as cofactor.

It localises to the mitochondrion inner membrane. Functionally, component of the ubiquinol-cytochrome c reductase complex (complex III or cytochrome b-c1 complex) that is part of the mitochondrial respiratory chain. The b-c1 complex mediates electron transfer from ubiquinol to cytochrome c. Contributes to the generation of a proton gradient across the mitochondrial membrane that is then used for ATP synthesis. The polypeptide is Cytochrome b (mt-cyb) (Anguilla rostrata (American eel)).